We begin with the raw amino-acid sequence, 498 residues long: MTELGMELESVRLATFGEWPLNAPVSAEDLVANGFFATGNWLEAECHFCHVRIDRWEYGDQVAERHRRSSPICSMVLAPNHCGNVPRSQESDNEGNSVVDSPESCSCPDLLLEANRLVTFKDWPNPNITPQALAKAGFYYLNRLDHVKCVWCNGVIAKWEKNDNAFEEHKRFFPQCPRVQMGPLIEFATGKNLDELGIQPTTLPLRPKYACVDARLRTFTDWPISNIQPASALAQAGLYYQKIGDQVRCFHCNIGLRSWQKEDEPWFEHAKWSPKCQFVLLAKGPAYVSEVLATTAANASSQPATAPAPTLQADVLMDEAPAKEALALGIDGGVVRNAIQRKLLSSGCAFSTLDELLHDIFDDAGAGAALEVREPPEPSAPFIEPCQATTSKAASVPIPVADSIPAKPQAAEAVANISKITDEIQKMSVATPNGNLSLEEENRQLKDARLCKVCLDEEVGVVFLPCGHLATCNQCAPSVANCPMCRADIKGFVRTFLS.

BIR repeat units follow at residues 12 to 77, 116 to 180, and 215 to 280; these read RLAT…SMVL, RLVT…PRVQ, and RLRT…QFVL. Zn(2+)-binding residues include cysteine 249, cysteine 252, histidine 269, and cysteine 276. An RING-type zinc finger spans residues 451 to 486; the sequence is CKVCLDEEVGVVFLPCGHLATCNQCAPSVANCPMCR.

It belongs to the IAP family. In terms of assembly, interacts with the caspase Strica. Interacts (via BIR2 domain) with rpr and grim. Interacts (via the BIR2 and BIR3 domains) with hid. Interacts (via BIR3 domain) with Drice. Interacts with Dredd; likely to bind Dredd simultaneously with Fadd to form a trimeric complex. In terms of processing, caspase-dependent cleavage is required for suppression of Drice-mediated cell death. Expressed in both principal and stellar cells of the Malphigian tubules.

It is found in the nucleus. The protein resides in the cytoplasm. Its function is as follows. Required for activation of NF-kappaB transcription factors in the immune deficiency (Imd) signaling cascade which is essential for innate immune responses upon infection by Gram-negative bacteria. Promotes cytoplasmic cleavage of Rel and its translocation to the nucleus where it drives expression of antimicrobial peptides. Binds, polyubiquitinates and activates Dredd which is required for Rel-mediated induction of antimicrobial peptides. Anti-apoptotic protein which binds, ubiquitinates and inactivates the effector caspase Drice. Suppresses rpr and hid-dependent cell death in the eye. However, has also been shown to have little, if any, role in the regulation of the canonical caspase-dependent apoptosis pathway. Plays a role in regulating the expression of ion channels. This is Death-associated inhibitor of apoptosis 2 (Diap2) from Drosophila melanogaster (Fruit fly).